Consider the following 115-residue polypeptide: Selenoprotein K homolog (115 aa).

A helical transmembrane segment spans residues F29–V49. The segment at T48–K115 is disordered. Gly residues predominate over residues Q58 to P84. Polar residues predominate over residues A104 to K115. U112 is a non-standard amino acid (selenocysteine).

This sequence belongs to the selenoprotein K family.

It localises to the membrane. This chain is Selenoprotein K homolog (selk), found in Dictyostelium discoideum (Social amoeba).